The primary structure comprises 172 residues: Ribosome maturation factor RimM (172 aa).

The PRC barrel domain maps to 96-168; the sequence is EGEFYYHQII…RVDVELMEGL (73 aa).

The protein belongs to the RimM family. As to quaternary structure, binds ribosomal protein uS19.

It localises to the cytoplasm. Its function is as follows. An accessory protein needed during the final step in the assembly of 30S ribosomal subunit, possibly for assembly of the head region. Essential for efficient processing of 16S rRNA. May be needed both before and after RbfA during the maturation of 16S rRNA. It has affinity for free ribosomal 30S subunits but not for 70S ribosomes. This is Ribosome maturation factor RimM from Streptococcus pyogenes serotype M28 (strain MGAS6180).